A 38-amino-acid chain; its full sequence is Large ribosomal subunit protein bL36 (38 aa).

It belongs to the bacterial ribosomal protein bL36 family.

In Pelodictyon phaeoclathratiforme (strain DSM 5477 / BU-1), this protein is Large ribosomal subunit protein bL36.